The sequence spans 255 residues: Imidazole glycerol phosphate synthase subunit HisF (255 aa).

Catalysis depends on residues Asp-12 and Asp-131.

The protein belongs to the HisA/HisF family. In terms of assembly, heterodimer of HisH and HisF.

The protein resides in the cytoplasm. It catalyses the reaction 5-[(5-phospho-1-deoxy-D-ribulos-1-ylimino)methylamino]-1-(5-phospho-beta-D-ribosyl)imidazole-4-carboxamide + L-glutamine = D-erythro-1-(imidazol-4-yl)glycerol 3-phosphate + 5-amino-1-(5-phospho-beta-D-ribosyl)imidazole-4-carboxamide + L-glutamate + H(+). It participates in amino-acid biosynthesis; L-histidine biosynthesis; L-histidine from 5-phospho-alpha-D-ribose 1-diphosphate: step 5/9. IGPS catalyzes the conversion of PRFAR and glutamine to IGP, AICAR and glutamate. The HisF subunit catalyzes the cyclization activity that produces IGP and AICAR from PRFAR using the ammonia provided by the HisH subunit. The chain is Imidazole glycerol phosphate synthase subunit HisF from Vesicomyosocius okutanii subsp. Calyptogena okutanii (strain HA).